A 384-amino-acid polypeptide reads, in one-letter code: Cytochrome b (384 aa).

Transmembrane regions (helical) follow at residues 33 to 53 (YGSL…FLAM), 77 to 98 (WLIR…YLHI), 113 to 133 (WNVG…GYVL), and 178 to 198 (FFAF…IHLL). His83 and His97 together coordinate heme b. The heme b site is built by His182 and His196. Position 201 (His201) interacts with a ubiquinone. The next 4 membrane-spanning stretches (helical) occupy residues 226 to 246 (YKDL…ALFT), 288 to 308 (LGGV…PILH), 320 to 340 (LSQM…WIGG), and 347 to 367 (FIII…VLMP).

This sequence belongs to the cytochrome b family. As to quaternary structure, the cytochrome bc1 complex contains 3 respiratory subunits (MT-CYB, CYC1 and UQCRFS1), 2 core proteins (UQCRC1 and UQCRC2) and probably 6 low-molecular weight proteins. Heme b serves as cofactor.

It localises to the mitochondrion inner membrane. In terms of biological role, component of the ubiquinol-cytochrome c reductase complex (complex III or cytochrome b-c1 complex) that is part of the mitochondrial respiratory chain. The b-c1 complex mediates electron transfer from ubiquinol to cytochrome c. Contributes to the generation of a proton gradient across the mitochondrial membrane that is then used for ATP synthesis. The protein is Cytochrome b (mt-cyb) of Anoplogaster cornuta (Common fangtooth).